We begin with the raw amino-acid sequence, 398 residues long: ATP-dependent (S)-NAD(P)H-hydrate dehydratase 1 (398 aa).

Residues 80-391 (LLRKAFQMIP…GYIGEAFELV (312 aa)) form the YjeF C-terminal domain. (6S)-NADPHX-binding positions include Gly187 and 240–246 (NHVEFQR). ATP is bound by residues 280–284 (KGSID) and 300–309 (GSPKRCGGQG). (6S)-NADPHX is bound at residue Asp310.

It belongs to the NnrD/CARKD family. Requires Mg(2+) as cofactor.

It is found in the cytoplasm. The catalysed reaction is (6S)-NADHX + ATP = ADP + phosphate + NADH + H(+). It carries out the reaction (6S)-NADPHX + ATP = ADP + phosphate + NADPH + H(+). Functionally, catalyzes the dehydration of the S-form of NAD(P)HX at the expense of ATP, which is converted to ADP. Together with NAD(P)HX epimerase, which catalyzes the epimerization of the S- and R-forms, the enzyme allows the repair of both epimers of NAD(P)HX, a damaged form of NAD(P)H that is a result of enzymatic or heat-dependent hydration. This is ATP-dependent (S)-NAD(P)H-hydrate dehydratase 1 from Puccinia graminis f. sp. tritici (strain CRL 75-36-700-3 / race SCCL) (Black stem rust fungus).